Consider the following 101-residue polypeptide: Aspartyl/glutamyl-tRNA(Asn/Gln) amidotransferase subunit C (101 aa).

The segment at 75-101 (QEALSGAPDAEEQRFRVPRILDEDVAS) is disordered. The segment covering 85–101 (EEQRFRVPRILDEDVAS) has biased composition (basic and acidic residues).

The protein belongs to the GatC family. Heterotrimer of A, B and C subunits.

The catalysed reaction is L-glutamyl-tRNA(Gln) + L-glutamine + ATP + H2O = L-glutaminyl-tRNA(Gln) + L-glutamate + ADP + phosphate + H(+). It catalyses the reaction L-aspartyl-tRNA(Asn) + L-glutamine + ATP + H2O = L-asparaginyl-tRNA(Asn) + L-glutamate + ADP + phosphate + 2 H(+). In terms of biological role, allows the formation of correctly charged Asn-tRNA(Asn) or Gln-tRNA(Gln) through the transamidation of misacylated Asp-tRNA(Asn) or Glu-tRNA(Gln) in organisms which lack either or both of asparaginyl-tRNA or glutaminyl-tRNA synthetases. The reaction takes place in the presence of glutamine and ATP through an activated phospho-Asp-tRNA(Asn) or phospho-Glu-tRNA(Gln). The protein is Aspartyl/glutamyl-tRNA(Asn/Gln) amidotransferase subunit C of Salinispora arenicola (strain CNS-205).